The chain runs to 437 residues: Sorting nexin-30 (437 aa).

Disordered regions lie at residues 1-44 (MAGG…PDLL) and 54-73 (LILP…SSSS). At Thr-38 the chain carries Phosphothreonine. Ser-40 is modified (phosphoserine). The span at 63–73 (AGTSSPASSSS) shows a compositional bias: low complexity. One can recognise a PX domain in the interval 89–210 (RDLFVIVDDP…IFLTAKDLNA (122 aa)). A 1,2-diacyl-sn-glycero-3-phospho-(1D-myo-inositol-3-phosphate) contacts are provided by Arg-132, Gln-134, Lys-162, and Arg-176. The region spanning 234–437 (KLRTRPLEFA…PLLQEKQEAK (204 aa)) is the BAR domain.

The protein belongs to the sorting nexin family. In terms of assembly, heterodimer; heterodimerizes with SNX4.

It is found in the early endosome membrane. Involved in the regulation of endocytosis and in several stages of intracellular trafficking. Together with SNX4, involved in autophagosome assembly. The chain is Sorting nexin-30 from Homo sapiens (Human).